Here is a 509-residue protein sequence, read N- to C-terminus: Maturase K (509 aa).

This sequence belongs to the intron maturase 2 family. MatK subfamily.

The protein resides in the plastid. It is found in the chloroplast. Its function is as follows. Usually encoded in the trnK tRNA gene intron. Probably assists in splicing its own and other chloroplast group II introns. This Nicotiana tomentosiformis (Tobacco) protein is Maturase K.